The chain runs to 141 residues: HTH-type transcriptional repressor NsrR (141 aa).

The HTH rrf2-type domain occupies 2 to 129 (QLTSFTDYGL…DNYTLADMVK (128 aa)). Positions 28 to 51 (ISQVTEVYGVSRNHMVKIINQLSR) form a DNA-binding region, H-T-H motif. [2Fe-2S] cluster-binding residues include C91, C96, and C102.

It depends on [2Fe-2S] cluster as a cofactor.

Functionally, nitric oxide-sensitive repressor of genes involved in protecting the cell against nitrosative stress. May require iron for activity. This is HTH-type transcriptional repressor NsrR from Yersinia pseudotuberculosis serotype O:1b (strain IP 31758).